Reading from the N-terminus, the 519-residue chain is uncharacterized protein (519 aa).

4 helical membrane-spanning segments follow: residues 141-161 (GSSL…ANVF), 202-222 (LGET…WALA), 385-405 (FVVR…PFVG), and 433-453 (TVVP…AELV).

It is found in the cell membrane. This is an uncharacterized protein from Sinorhizobium fredii (strain NBRC 101917 / NGR234).